Consider the following 125-residue polypeptide: Small ribosomal subunit protein uS12c (125 aa).

Belongs to the universal ribosomal protein uS12 family. As to quaternary structure, part of the 30S ribosomal subunit.

It localises to the plastid. The protein resides in the chloroplast. In terms of biological role, with S4 and S5 plays an important role in translational accuracy. Located at the interface of the 30S and 50S subunits. The polypeptide is Small ribosomal subunit protein uS12c (rps12) (Tupiella akineta (Green alga)).